A 754-amino-acid chain; its full sequence is Endothelin-converting enzyme 1 (754 aa).

Residues 1–52 (MMSTYKRATLDEEDLVDSLSEGEVYPNGLQVNFRNFRSSQRCWATRTQVEKR) lie on the Cytoplasmic side of the membrane. T9 is subject to Phosphothreonine. Residues 53–73 (LIVLVALLAAGLVACLTALGI) form a helical; Signal-anchor for type II membrane protein membrane-spanning segment. Topologically, residues 74 to 754 (QYRTRTPPVC…MNPRHKCEVW (681 aa)) are extracellular. The Peptidase M13 domain maps to 82–754 (VCLSEACVSV…MNPRHKCEVW (673 aa)). Cystine bridges form between C83-C88, C106-C739, C114-C699, C169-C419, and C628-C751. N150, N171, N194, N254, N300, N346, N367, and N523 each carry an N-linked (GlcNAc...) asparagine glycan. Zn(2+) is bound at residue H591. E592 is a catalytic residue. Residue H595 coordinates Zn(2+). Residues N616 and N635 are each glycosylated (N-linked (GlcNAc...) asparagine). E651 serves as a coordination point for Zn(2+). Catalysis depends on D655, which acts as the Proton donor.

Belongs to the peptidase M13 family. In terms of assembly, homodimer; disulfide-linked. Interacts with PPP1R16B. Interacts with TSPAN8; this interaction recruits the endothelin converting enzyme ECE1 to tetraspanin-enriched microdomains and positively modulates its enzymatic activity. Requires Zn(2+) as cofactor.

It localises to the cell membrane. It catalyses the reaction Hydrolysis of the 21-Trp-|-Val-22 bond in big endothelin to form endothelin 1.. Inhibited by phosphoramidon. Functionally, converts big endothelin-1 to endothelin-1. In Cavia porcellus (Guinea pig), this protein is Endothelin-converting enzyme 1 (ECE1).